Here is a 538-residue protein sequence, read N- to C-terminus: Putative cysteine ligase BshC (538 aa).

A coiled-coil region spans residues 454–482; the sequence is LEKNAGFIQDQLQFLEKTVIRRIEEKENY.

It belongs to the BshC family.

In terms of biological role, involved in bacillithiol (BSH) biosynthesis. May catalyze the last step of the pathway, the addition of cysteine to glucosamine malate (GlcN-Mal) to generate BSH. In Bacillus licheniformis (strain ATCC 14580 / DSM 13 / JCM 2505 / CCUG 7422 / NBRC 12200 / NCIMB 9375 / NCTC 10341 / NRRL NRS-1264 / Gibson 46), this protein is Putative cysteine ligase BshC.